The primary structure comprises 297 residues: Cbb3-type cytochrome c oxidase subunit CcoP (297 aa).

Residues 1 to 35 (MSKKPTTKKEVQTTGHSWDGIEELNTPLPRWWLWT) are Cytoplasmic-facing. A helical membrane pass occupies residues 36-56 (FYATIVWGVAYSIAMPAWPIF). Over 57–297 (ASGATPGILG…SYVHSLGGGQ (241 aa)) the chain is Periplasmic. Cytochrome c domains are found at residues 108 to 199 (YTRN…LKIS) and 206 to 294 (ARAT…HSLG). Positions 121, 124, 125, 174, 219, 222, 223, and 264 each coordinate heme c.

Belongs to the CcoP / FixP family. As to quaternary structure, component of the cbb3-type cytochrome c oxidase at least composed of CcoN, CcoO, CcoQ and CcoP. Interacts with CcoH (via transmembrane domain). Requires heme c as cofactor.

It localises to the cell inner membrane. Its pathway is energy metabolism; oxidative phosphorylation. Functionally, C-type cytochrome. Part of the cbb3-type cytochrome c oxidase complex. CcoP subunit is required for transferring electrons from donor cytochrome c via its heme groups to CcoO subunit. From there, electrons are shuttled to the catalytic binuclear center of CcoN subunit where oxygen reduction takes place. The complex also functions as a proton pump. The protein is Cbb3-type cytochrome c oxidase subunit CcoP of Rhodobacter capsulatus (strain ATCC BAA-309 / NBRC 16581 / SB1003).